The sequence spans 311 residues: Olfactory receptor 5L1 (311 aa).

The Extracellular portion of the chain corresponds to 1–25 (MGKENCTTVAEFILLGLSDVPELRV). Asparagine 5 is a glycosylation site (N-linked (GlcNAc...) asparagine). Residues 26–46 (CLFLLFLLIYGVTLLANLGMI) traverse the membrane as a helical segment. At 47 to 54 (ALIQVSSR) the chain is on the cytoplasmic side. A helical transmembrane segment spans residues 55-75 (LHTPMYFFLSHLSSVDFCYSS). Residues 76-99 (IIVPKMLANIFNKDKAISFLGCMV) lie on the Extracellular side of the membrane. An intrachain disulfide couples cysteine 97 to cysteine 189. A helical membrane pass occupies residues 100–120 (QFYLFCTCVVTEVFLLAVMAY). Over 121–139 (DRFVAICNPLLYTVTMSWK) the chain is Cytoplasmic. The helical transmembrane segment at 140–160 (VRVELASCCYFCGTVCSLIHL) threads the bilayer. The Extracellular portion of the chain corresponds to 161–196 (CLALRIPFYRSNVINHFFCDLPPVLSLACSDITVNE). Residue asparagine 195 is glycosylated (N-linked (GlcNAc...) asparagine). Residues 197–217 (TLLFLVATLNESVTIMIILTS) traverse the membrane as a helical segment. Over 218 to 237 (YLLILTTILKMGSAEGRHKA) the chain is Cytoplasmic. Residues 238–258 (FSTCASHLTAITVFHGTVLSI) form a helical membrane-spanning segment. Residues 259 to 271 (YCRPSSGNSGDAD) lie on the Extracellular side of the membrane. Residues 272–292 (KVATVFYTVVIPMLNSVIYSL) form a helical membrane-spanning segment. Over 293-311 (RNKDVKEALRKVMGSKIHS) the chain is Cytoplasmic.

This sequence belongs to the G-protein coupled receptor 1 family.

It localises to the cell membrane. Functionally, odorant receptor. The chain is Olfactory receptor 5L1 (OR5L1) from Homo sapiens (Human).